The following is a 409-amino-acid chain: NADH-ubiquinone oxidoreductase chain 4 (409 aa).

13 consecutive transmembrane segments (helical) span residues 10-30 (LWLFKPIYFLLFTVMFSFLIF), 44-64 (SYSFILLIVMSLFILGIIVIS), 76-96 (ILVFICIIFFIPSNMMMLYMF), 98-118 (ELSMFPILVMILGYGSQIEKI), 120-140 (SSYYLMFYAAFCSFPFLFVYF), 160-180 (FFILSLSFMMKFPIYFLHLWL), 194-214 (LLAGLLLKLGTAGFLRILGSL), 221-241 (VWILIAFLGMILGSFCCVFQS), 245-265 (ALAAYSSVTHMSFLLLSLVFI), 271-291 (ISSVMLMLAHGYTSTLMFYLI), 305-325 (FMSSFFSSSMIMGILFSVVFL), 353-373 (MFVMIFIYFVVSFYYSLFLIT), and 389-409 (VGFSAPLVLMMYNVFWLSVFY).

Belongs to the complex I subunit 4 family.

The protein resides in the mitochondrion membrane. It catalyses the reaction a ubiquinone + NADH + 5 H(+)(in) = a ubiquinol + NAD(+) + 4 H(+)(out). In terms of biological role, core subunit of the mitochondrial membrane respiratory chain NADH dehydrogenase (Complex I) that is believed to belong to the minimal assembly required for catalysis. Complex I functions in the transfer of electrons from NADH to the respiratory chain. The immediate electron acceptor for the enzyme is believed to be ubiquinone. This is NADH-ubiquinone oxidoreductase chain 4 from Caenorhabditis elegans.